Reading from the N-terminus, the 748-residue chain is Cytosolic phospholipase A2 (748 aa).

The phospholipid binding stretch occupies residues 1 to 178 (MSFIDPYQHI…MKKLLGPKKS (178 aa)). Position 2 is a phosphoserine (serine 2). The region spanning 6–122 (PYQHIIVEHQ…KVGEKKEVPF (117 aa)) is the C2 domain. 7 residues coordinate Ca(2+): aspartate 40, threonine 41, aspartate 43, asparagine 65, aspartate 93, alanine 94, and asparagine 95. The PLA2c domain occupies 140 to 739 (SCPDLRFSMA…SNVEARKFFN (600 aa)). Serine 228 functions as the Nucleophile in the catalytic mechanism. Threonine 268 is modified (phosphothreonine). Residues 427–458 (KHIVSNDSSDSDDEAQGPKGTENEEAEKEYQS) are disordered. A phosphoserine mark is found at serine 434, serine 435, and serine 437. Position 505 is a phosphoserine; by MAPK (serine 505). Serine 515 is modified (phosphoserine). Lysine 540 is covalently cross-linked (Glycyl lysine isopeptide (Lys-Gly) (interchain with G-Cter in SUMO2)). The Proton acceptor role is filled by aspartate 548. Residue lysine 605 forms a Glycyl lysine isopeptide (Lys-Gly) (interchain with G-Cter in SUMO2) linkage. A phosphoserine mark is found at serine 726 and serine 728.

Interacts with KAT5. In terms of processing, phosphorylated at both Ser-505 and Ser-726 in response to mitogenic stimuli. Expressed in various organs including uterus, kidney, spleen, liver, heart, lung and brain (at protein level).

The protein resides in the cytoplasm. It localises to the golgi apparatus membrane. It is found in the nucleus envelope. The catalysed reaction is a 1,2-diacyl-sn-glycero-3-phosphocholine + H2O = a 1-acyl-sn-glycero-3-phosphocholine + a fatty acid + H(+). It catalyses the reaction a 1-O-alkyl-2-acyl-sn-glycero-3-phosphocholine + H2O = a 1-O-alkyl-sn-glycero-3-phosphocholine + a fatty acid + H(+). It carries out the reaction a 1-acyl-sn-glycero-3-phosphocholine + H2O = sn-glycerol 3-phosphocholine + a fatty acid + H(+). The enzyme catalyses 1-hexadecanoyl-2-(5Z,8Z,11Z,14Z-eicosatetraenoyl)-sn-glycero-3-phosphocholine + H2O = 1-hexadecanoyl-sn-glycero-3-phosphocholine + (5Z,8Z,11Z,14Z)-eicosatetraenoate + H(+). The catalysed reaction is 1,2-di-(5Z,8Z,11Z,14Z-eicosatetraenoyl)-sn-glycero-3-phosphocholine + H2O = 1-(5Z,8Z,11Z,14Z-eicosatetraenoyl)-sn-glycero-3-phosphocholine + (5Z,8Z,11Z,14Z)-eicosatetraenoate + H(+). It catalyses the reaction 1-octadecanoyl-2-(5Z,8Z,11Z,14Z-eicosatetraenoyl)-sn-glycero-3-phosphocholine + H2O = 1-octadecanoyl-sn-glycero-3-phosphocholine + (5Z,8Z,11Z,14Z)-eicosatetraenoate + H(+). It carries out the reaction 1-hexadecanoyl-2-(9Z,12Z-octadecadienoyl)-sn-glycero-3-phosphocholine + H2O = (9Z,12Z)-octadecadienoate + 1-hexadecanoyl-sn-glycero-3-phosphocholine + H(+). The enzyme catalyses 1-octadecanoyl-2-(9Z,12Z,15Z-octadecatrienoyl)-sn-glycero-3-phosphocholine + H2O = (9Z,12Z,15Z)-octadecatrienoate + 1-octadecanoyl-sn-glycero-3-phosphocholine + H(+). The catalysed reaction is 1-(5Z,8Z,11Z,14Z-eicosatetraenoyl)-2-hexadecanoyl-sn-glycero-3-phosphocholine + H2O = 1-(5Z,8Z,11Z,14Z-eicosatetraenoyl)-sn-glycero-3-phosphocholine + hexadecanoate + H(+). It catalyses the reaction 1-O-hexadecyl-2-(5Z,8Z,11Z,14Z)-eicosatetraenoyl-sn-glycero-3-phosphocholine + H2O = 1-O-hexadecyl-sn-glycero-3-phosphocholine + (5Z,8Z,11Z,14Z)-eicosatetraenoate + H(+). It carries out the reaction 1,2-di-(9Z-octadecenoyl)-sn-glycero-3-phospho-(1'-sn-glycerol) + H2O = 1-(9Z-octadecenoyl)-sn-glycero-3-phospho-(1'-sn-glycerol) + (9Z)-octadecenoate + H(+). The enzyme catalyses 1-octadecanoyl-2-(5Z,8Z,11Z,14Z-eicosatetraenoyl)-sn-glycero-3-phosphate + H2O = 1-octadecanoyl-sn-glycero-3-phosphate + (5Z,8Z,11Z,14Z)-eicosatetraenoate + H(+). The catalysed reaction is 1-hexadecanoyl-sn-glycero-3-phosphocholine + H2O = sn-glycerol 3-phosphocholine + hexadecanoate + H(+). It catalyses the reaction 2-(prostaglandin E2)-sn-glycero-3-phosphoethanolamine + H2O = sn-glycero-3-phosphoethanolamine + prostaglandin E2 + H(+). It carries out the reaction 2-[(15S)-hydroxy-(5Z,8Z,11Z,13E)-eicosatetraenoyl]-sn-glycero-3-phosphocholine + H2O = (15S)-hydroxy-(5Z,8Z,11Z,13E)-eicosatetraenoate + sn-glycerol 3-phosphocholine + H(+). The enzyme catalyses 2-[(15R)-hydroxy-(5Z,8Z,11Z,13E)-eicosatetraenoyl]-sn-glycero-3-phosphocholine + H2O = (15R)-hydroxy-(5Z,8Z,11Z,13E)-eicosatetraenoate + sn-glycerol 3-phosphocholine + H(+). The catalysed reaction is 2-(prostaglandin E2)-sn-glycero-3-phosphocholine + H2O = prostaglandin E2 + sn-glycerol 3-phosphocholine + H(+). It catalyses the reaction 2-[(11R)-hydroxy-(5Z,8Z,12E,14Z)-eicosatetraenoyl]-sn-glycero-3-phosphocholine + H2O = (11R)-hydroxy-(5Z,8Z,12E,14Z)-eicosatetraenoate + sn-glycerol 3-phosphocholine + H(+). It carries out the reaction 1-(5Z,8Z,11Z,14Z-eicosatetraenoyl)-2-O-hexadecyl-sn-glycero-3-phosphocholine + H2O = 2-O-hexadecyl-sn-glycero-3-phosphocholine + (5Z,8Z,11Z,14Z)-eicosatetraenoate + H(+). The enzyme catalyses 1-octadecanoyl-2-(5Z,8Z,11Z,14Z-eicosatetraenoyl)-sn-glycero-3-phosphocholine + glycerol = 1-(5Z,8Z,11Z,14Z-eicosatetraenoyl)-glycerol + 1-octadecanoyl-sn-glycero-3-phosphocholine. The catalysed reaction is 1-octadecanoyl-2-(9Z,12Z,15Z-octadecatrienoyl)-sn-glycero-3-phosphocholine + glycerol = 1-(9Z,12Z,15Z-octadecatrienoyl)-glycerol + 1-octadecanoyl-sn-glycero-3-phosphocholine. The protein operates within membrane lipid metabolism; glycerophospholipid metabolism. Its pathway is lipid metabolism; arachidonate metabolism. It functions in the pathway lipid metabolism; prostaglandin biosynthesis. It participates in lipid metabolism; leukotriene B4 biosynthesis. Activated by cytosolic calcium, which is necessary for binding to membrane lipids. Activated by phosphorylation in response to mitogenic stimuli. Stimulated by agonists such as ATP and thrombin. Functionally, has primarily calcium-dependent phospholipase and lysophospholipase activities, with a major role in membrane lipid remodeling and biosynthesis of lipid mediators of the inflammatory response. Plays an important role in embryo implantation and parturition through its ability to trigger prostanoid production. Preferentially hydrolyzes the ester bond of the fatty acyl group attached at sn-2 position of phospholipids (phospholipase A2 activity). Selectively hydrolyzes sn-2 arachidonoyl group from membrane phospholipids, providing the precursor for eicosanoid biosynthesis via the cyclooxygenase pathway. In an alternative pathway of eicosanoid biosynthesis, hydrolyzes sn-2 fatty acyl chain of eicosanoid lysophopholipids to release free bioactive eicosanoids. Hydrolyzes the ester bond of the fatty acyl group attached at sn-1 position of phospholipids (phospholipase A1 activity) only if an ether linkage rather than an ester linkage is present at the sn-2 position. This hydrolysis is not stereospecific. Has calcium-independent phospholipase A2 and lysophospholipase activities in the presence of phosphoinositides. Has O-acyltransferase activity. Catalyzes the transfer of fatty acyl chains from phospholipids to a primary hydroxyl group of glycerol (sn-1 or sn-3), potentially contributing to monoacylglycerol synthesis. This Mus musculus (Mouse) protein is Cytosolic phospholipase A2 (Pla2g4a).